The chain runs to 78 residues: Large ribosomal subunit protein bL28 (78 aa).

The segment at 1–21 is disordered; the sequence is MSRVCQVTGKRPMVGNNRSHA.

It belongs to the bacterial ribosomal protein bL28 family.

The polypeptide is Large ribosomal subunit protein bL28 (Shewanella halifaxensis (strain HAW-EB4)).